A 113-amino-acid chain; its full sequence is Large ribosomal subunit protein uL22 (113 aa).

This sequence belongs to the universal ribosomal protein uL22 family. In terms of assembly, part of the 50S ribosomal subunit.

Its function is as follows. This protein binds specifically to 23S rRNA; its binding is stimulated by other ribosomal proteins, e.g. L4, L17, and L20. It is important during the early stages of 50S assembly. It makes multiple contacts with different domains of the 23S rRNA in the assembled 50S subunit and ribosome. In terms of biological role, the globular domain of the protein is located near the polypeptide exit tunnel on the outside of the subunit, while an extended beta-hairpin is found that lines the wall of the exit tunnel in the center of the 70S ribosome. This Herpetosiphon aurantiacus (strain ATCC 23779 / DSM 785 / 114-95) protein is Large ribosomal subunit protein uL22.